Reading from the N-terminus, the 477-residue chain is Ribulose bisphosphate carboxylase large chain (477 aa).

Residues 1 to 2 (MS) constitute a propeptide that is removed on maturation. The residue at position 3 (P3) is an N-acetylproline. Residue K14 is modified to N6,N6,N6-trimethyllysine. Substrate contacts are provided by N123 and T173. Residue K175 is the Proton acceptor of the active site. K177 is a binding site for substrate. K201, D203, and E204 together coordinate Mg(2+). An N6-carboxylysine modification is found at K201. H294 (proton acceptor) is an active-site residue. Residues R295, H327, and S379 each coordinate substrate.

This sequence belongs to the RuBisCO large chain family. Type I subfamily. In terms of assembly, heterohexadecamer of 8 large chains and 8 small chains; disulfide-linked. The disulfide link is formed within the large subunit homodimers. It depends on Mg(2+) as a cofactor. The disulfide bond which can form in the large chain dimeric partners within the hexadecamer appears to be associated with oxidative stress and protein turnover.

It is found in the plastid. The protein localises to the chloroplast. The enzyme catalyses 2 (2R)-3-phosphoglycerate + 2 H(+) = D-ribulose 1,5-bisphosphate + CO2 + H2O. It carries out the reaction D-ribulose 1,5-bisphosphate + O2 = 2-phosphoglycolate + (2R)-3-phosphoglycerate + 2 H(+). Functionally, ruBisCO catalyzes two reactions: the carboxylation of D-ribulose 1,5-bisphosphate, the primary event in carbon dioxide fixation, as well as the oxidative fragmentation of the pentose substrate in the photorespiration process. Both reactions occur simultaneously and in competition at the same active site. The protein is Ribulose bisphosphate carboxylase large chain of Manihot esculenta (Cassava).